The primary structure comprises 243 residues: UPF0502 protein Rmet_3697 (243 aa).

The segment covering 1–11 (MTDTPDTPDTP) has biased composition (low complexity). Positions 1 to 23 (MTDTPDTPDTPMATGASSRPPLR) are disordered.

It belongs to the UPF0502 family.

In Cupriavidus metallidurans (strain ATCC 43123 / DSM 2839 / NBRC 102507 / CH34) (Ralstonia metallidurans), this protein is UPF0502 protein Rmet_3697.